A 121-amino-acid polypeptide reads, in one-letter code: Small ribosomal subunit protein uS13 (121 aa).

Residues 92-121 (RKGLPMRGQRTRTNARTRKGPRRAAQALKK) form a disordered region.

This sequence belongs to the universal ribosomal protein uS13 family. As to quaternary structure, part of the 30S ribosomal subunit. Forms a loose heterodimer with protein S19. Forms two bridges to the 50S subunit in the 70S ribosome.

Functionally, located at the top of the head of the 30S subunit, it contacts several helices of the 16S rRNA. In the 70S ribosome it contacts the 23S rRNA (bridge B1a) and protein L5 of the 50S subunit (bridge B1b), connecting the 2 subunits; these bridges are implicated in subunit movement. Contacts the tRNAs in the A and P-sites. This chain is Small ribosomal subunit protein uS13, found in Burkholderia cenocepacia (strain ATCC BAA-245 / DSM 16553 / LMG 16656 / NCTC 13227 / J2315 / CF5610) (Burkholderia cepacia (strain J2315)).